The primary structure comprises 488 residues: Nitrogen metabolite repression protein nmr (488 aa).

The disordered stretch occupies residues 1–45 (MPAEILSELPLRPAPRDIKIPNAMHNEERRHKHSRSSYSEMSPLM). Positions 14-29 (APRDIKIPNAMHNEER) are enriched in basic and acidic residues. The span at 36-45 (SSYSEMSPLM) shows a compositional bias: polar residues. Residues 71 to 76 (NAAGRQ), N165, K215, and 237 to 240 (YNNN) contribute to the NADP(+) site. NAD(+)-binding positions include 75 to 76 (RQ), 165 to 167 (NTT), K215, and 237 to 240 (YNNN). The segment at 412-488 (EEYDGGGGNN…NKRADEEWLA (77 aa)) is dispensable for NMR function. The disordered stretch occupies residues 422 to 488 (IGNNHNNHHQ…NKRADEEWLA (67 aa)). Residues 438–459 (HQNGHQNGHNGINGHIVNGGVD) show a composition bias toward low complexity. Positions 460–473 (SESEEEDSDSDDEG) are enriched in acidic residues.

Belongs to the NmrA-type oxidoreductase family. Interacts with nit-2.

Its subcellular location is the nucleus. Functionally, may be a redox sensor protein. Negative transcriptional regulator involved in the post-transcriptional modulation of the GATA-type transcription factor nit-2, forming part of a system controlling nitrogen metabolite repression. In Neurospora crassa (strain ATCC 24698 / 74-OR23-1A / CBS 708.71 / DSM 1257 / FGSC 987), this protein is Nitrogen metabolite repression protein nmr (nmr).